The following is a 149-amino-acid chain: Large ribosomal subunit protein uL15 (149 aa).

The span at 1 to 29 shows a compositional bias: basic residues; that stretch reads MVSHLKKTRKLRGHVSHGHGRVGKHRKGG. Positions 1–38 are disordered; it reads MVSHLKKTRKLRGHVSHGHGRVGKHRKGGCRGGRGKAG.

This sequence belongs to the universal ribosomal protein uL15 family.

The polypeptide is Large ribosomal subunit protein uL15 (RPL27A) (Tetrahymena thermophila).